The sequence spans 135 residues: Glutaredoxin-C4 (135 aa).

The Glutaredoxin domain occupies 32–132 (ADFVKKTISS…KLLGVSGNKE (101 aa)). A disulfide bridge links cysteine 52 with cysteine 55.

The protein belongs to the glutaredoxin family. CPYC subfamily.

The protein localises to the cytoplasm. In terms of biological role, has a glutathione-disulfide oxidoreductase activity in the presence of NADPH and glutathione reductase. Reduces low molecular weight disulfides and proteins. The sequence is that of Glutaredoxin-C4 (GRXC4) from Arabidopsis thaliana (Mouse-ear cress).